Consider the following 350-residue polypeptide: L-threonine 3-dehydrogenase (350 aa).

Cys42 provides a ligand contact to Zn(2+). Residues Thr44 and His47 each act as charge relay system in the active site. Positions 67, 68, 97, 100, 103, and 111 each coordinate Zn(2+). NAD(+)-binding positions include Leu179, Glu199, Arg204, 266-268 (LGL), and 291-292 (IT).

Belongs to the zinc-containing alcohol dehydrogenase family. In terms of assembly, homotetramer. Zn(2+) serves as cofactor.

The protein localises to the cytoplasm. It catalyses the reaction L-threonine + NAD(+) = (2S)-2-amino-3-oxobutanoate + NADH + H(+). It participates in amino-acid degradation; L-threonine degradation via oxydo-reductase pathway; glycine from L-threonine: step 1/2. In terms of biological role, catalyzes the NAD(+)-dependent oxidation of L-threonine to 2-amino-3-ketobutyrate. To a lesser extent, also catalyzes the oxidation of L-serine. The chain is L-threonine 3-dehydrogenase from Thermococcus kodakarensis (strain ATCC BAA-918 / JCM 12380 / KOD1) (Pyrococcus kodakaraensis (strain KOD1)).